The sequence spans 276 residues: Fructoselysine 3-epimerase (276 aa).

Residue E148 is the Proton donor/acceptor of the active site. The a divalent metal cation site is built by E148, D181, H207, and E247. E247 serves as the catalytic Proton donor/acceptor.

It belongs to the FrlC family. In terms of assembly, homooctamer. Requires a divalent metal cation as cofactor.

The enzyme catalyses N(6)-(D-psicosyl)-L-lysine = N(6)-(D-fructosyl)-L-lysine. Catalyzes the reversible interconversion of fructoselysine with its C-3 epimer, psicoselysine. May allow S.flexneri to utilize psicoselysine for growth. The protein is Fructoselysine 3-epimerase (frlC) of Shigella flexneri.